A 678-amino-acid chain; its full sequence is MAKKFEIVSQYEPAGDQPVAITQLVEGLEDGEAFQTLLGVTGSGKTFTMANVIAKVQRPTIILAHNKTLAAQLYGEMKSFFPHNAVEYFVSYYDYYQPEAYVPASDTYIAKDSSVNEQIEQLRLSATKALMERKDVVLIATVSAIYGLGDPDQYLKMILQLRLGDTISQRDILQQLTTMQYTRNDVELWRGCFRVRGDVIDVFPAEAEEYAVRIELFDDEVDSLAWFDPLTGEVLTRPTRITVYPKSHYVTPKERVLQTIEQVKVELVSRLEELRSLNKLVEAQRLEERTRLDIEMMSELGYCSGIENYSRYLSGRASGEPPPTLLDYLPKNALMFIDESHVTIPQIGGMYKGDRSRKENLVTFGFRLPSAMDNRPMRFDEFEKIMPQTIFVSATPGKYEAEHESKIVEQVVRPTGLLDPVLEVRPALTQVDDLLGEIRLRVEKEERVLVTTLTKRMAENLTEYLEEHNVRVRYLHSDIDTVERIEIIRDLRLGEFDVLVGINLLREGLDIPEVSLVAILDADKEGFLRSDRSLIQTIGRAARNVAGKAILYADKITKSMQKAIDETERRRAKQIQHNTEQGITPQKLNKKITDILEDSPYAPKPGASAAKLKAAEADGEYSPQEMQRMTPAQLASEIKRMEKQMYQAAKDLDFELAAKLRDDLKRLKSSMVGVGDLR.

In terms of domain architecture, Helicase ATP-binding spans Glu-26 to Asp-185. Gly-39–Thr-46 provides a ligand contact to ATP. The Beta-hairpin signature appears at Tyr-92–Val-115. The Helicase C-terminal domain maps to Gln-430–Leu-596. The tract at residues Glu-597–Thr-630 is disordered. Residues Ala-635 to Ser-670 enclose the UVR domain.

It belongs to the UvrB family. As to quaternary structure, forms a heterotetramer with UvrA during the search for lesions. Interacts with UvrC in an incision complex.

Its subcellular location is the cytoplasm. In terms of biological role, the UvrABC repair system catalyzes the recognition and processing of DNA lesions. A damage recognition complex composed of 2 UvrA and 2 UvrB subunits scans DNA for abnormalities. Upon binding of the UvrA(2)B(2) complex to a putative damaged site, the DNA wraps around one UvrB monomer. DNA wrap is dependent on ATP binding by UvrB and probably causes local melting of the DNA helix, facilitating insertion of UvrB beta-hairpin between the DNA strands. Then UvrB probes one DNA strand for the presence of a lesion. If a lesion is found the UvrA subunits dissociate and the UvrB-DNA preincision complex is formed. This complex is subsequently bound by UvrC and the second UvrB is released. If no lesion is found, the DNA wraps around the other UvrB subunit that will check the other stand for damage. The sequence is that of UvrABC system protein B from Hydrogenovibrio crunogenus (strain DSM 25203 / XCL-2) (Thiomicrospira crunogena).